The chain runs to 138 residues: Invertebrate-type lysozyme 6 (138 aa).

An N-terminal signal peptide occupies residues 1–18 (MFVKLCGILAFAVTYASS). The 120-residue stretch at 19–138 (DCLQCICKKE…WNGIKGLGCS (120 aa)) folds into the I-type lysozyme domain. 6 disulfide bridges follow: C20–C106, C25–C31, C36–C45, C58–C86, C76–C82, and C98–C120. E28 (proton donor) is an active-site residue. D39 serves as the catalytic Nucleophile. A substrate-binding site is contributed by 51–57 (KLSYYKD). Substrate is bound by residues Y90 and 113–115 (HNG).

The protein belongs to the glycosyl hydrolase 22 family. Type-I lysozyme subfamily. Expressed in pharyngeal gland cells and duct projections, coelomocytes and intestine.

The catalysed reaction is Hydrolysis of (1-&gt;4)-beta-linkages between N-acetylmuramic acid and N-acetyl-D-glucosamine residues in a peptidoglycan and between N-acetyl-D-glucosamine residues in chitodextrins.. Functionally, has bacteriolytic activity against Gram-positive bacteria. This chain is Invertebrate-type lysozyme 6, found in Caenorhabditis elegans.